Reading from the N-terminus, the 78-residue chain is Large ribosomal subunit protein bL28 (78 aa).

Residues 1–29 (MSAHCQVTGRQPSFGKSVSHSHRRTSRRW) form a disordered region.

It belongs to the bacterial ribosomal protein bL28 family.

The polypeptide is Large ribosomal subunit protein bL28 (Corynebacterium efficiens (strain DSM 44549 / YS-314 / AJ 12310 / JCM 11189 / NBRC 100395)).